The primary structure comprises 164 residues: Endoribonuclease YbeY (164 aa).

Zn(2+) is bound by residues histidine 120, histidine 124, and histidine 130.

It belongs to the endoribonuclease YbeY family. It depends on Zn(2+) as a cofactor.

It localises to the cytoplasm. Functionally, single strand-specific metallo-endoribonuclease involved in late-stage 70S ribosome quality control and in maturation of the 3' terminus of the 16S rRNA. This Acidothermus cellulolyticus (strain ATCC 43068 / DSM 8971 / 11B) protein is Endoribonuclease YbeY.